The following is a 143-amino-acid chain: Mediator of RNA polymerase II transcription subunit 21 (143 aa).

Positions 53–130 (KEFEKNIDEL…KVRTLTQDFT (78 aa)) form a coiled coil.

The protein belongs to the Mediator complex subunit 21 family. Component of the Mediator complex.

The protein localises to the nucleus. Its function is as follows. Component of the Mediator complex, a coactivator involved in the regulated transcription of nearly all RNA polymerase II-dependent genes. Mediator functions as a bridge to convey information from gene-specific regulatory proteins to the basal RNA polymerase II transcription machinery. Mediator is recruited to promoters by direct interactions with regulatory proteins and serves as a scaffold for the assembly of a functional preinitiation complex with RNA polymerase II and the general transcription factors. This is Mediator of RNA polymerase II transcription subunit 21 (SRB7) from Kluyveromyces lactis (strain ATCC 8585 / CBS 2359 / DSM 70799 / NBRC 1267 / NRRL Y-1140 / WM37) (Yeast).